Here is a 240-residue protein sequence, read N- to C-terminus: Tetrahydromethanopterin S-methyltransferase subunit A (240 aa).

At 1-218 (MADKKEPAPG…KFHSGVHAGK (218 aa)) the chain is on the cytoplasmic side. His85 contacts 5-hydroxybenzimidazolylcob(I)amide. Residues 219–239 (IEGAMIGLTVTISLLGLLLLG) form a helical membrane-spanning segment. Arg240 is a topological domain (extracellular).

The protein belongs to the MtrA family. As to quaternary structure, the complex is composed of 8 subunits; MtrA, MtrB, MtrC, MtrD, MtrE, MtrF, MtrG and MtrH. Requires 5-hydroxybenzimidazolylcob(I)amide as cofactor.

The protein localises to the cell membrane. It catalyses the reaction 5-methyl-5,6,7,8-tetrahydromethanopterin + coenzyme M + 2 Na(+)(in) = 5,6,7,8-tetrahydromethanopterin + methyl-coenzyme M + 2 Na(+)(out). The protein operates within one-carbon metabolism; methanogenesis from CO(2); methyl-coenzyme M from 5,10-methylene-5,6,7,8-tetrahydromethanopterin: step 2/2. Its function is as follows. Part of a complex that catalyzes the formation of methyl-coenzyme M and tetrahydromethanopterin from coenzyme M and methyl-tetrahydromethanopterin. This is an energy-conserving, sodium-ion translocating step. The sequence is that of Tetrahydromethanopterin S-methyltransferase subunit A from Methanosarcina barkeri (strain Fusaro / DSM 804).